The chain runs to 332 residues: 2,3-diketo-L-gulonate reductase (332 aa).

The Proton donor role is filled by histidine 44. NAD(+) is bound by residues 168 to 174, 224 to 225, and 304 to 306; these read ITMVDMS, WK, and GHE.

The protein belongs to the LDH2/MDH2 oxidoreductase family. DlgD subfamily. As to quaternary structure, homodimer.

It is found in the cytoplasm. It catalyses the reaction 3-dehydro-L-gulonate + NAD(+) = 2,3-dioxo-L-gulonate + NADH + H(+). It carries out the reaction 3-dehydro-L-gulonate + NADP(+) = 2,3-dioxo-L-gulonate + NADPH + H(+). Functionally, catalyzes the reduction of 2,3-diketo-L-gulonate in the presence of NADH, to form 3-keto-L-gulonate. The polypeptide is 2,3-diketo-L-gulonate reductase (Salmonella paratyphi A (strain ATCC 9150 / SARB42)).